A 323-amino-acid polypeptide reads, in one-letter code: Probable cell division protein WhiA (323 aa).

The segment at residues 275 to 309 (TLKELGEMLTTGQVSKSGINHRLRKLDQIAERLRS) is a DNA-binding region (H-T-H motif).

This sequence belongs to the WhiA family.

Its function is as follows. Involved in cell division and chromosome segregation. The protein is Probable cell division protein WhiA of Listeria monocytogenes serotype 4a (strain HCC23).